We begin with the raw amino-acid sequence, 302 residues long: MRHLISMRDIGREEILNILNESEKMEAILNENGHCDFLNGRILATLFYEPSTRTRLSFETAMKRLGGNVIGFTDISNTSVTKGESLADTIKVISGYSDLIAIRHPSEGAARLSSENSKVPVINAGDGSNQHPTQTLLDLYTIKREVGHIENLKIAFIGDLKYGRTVHSLCQALSLFKSVEIKLIAPDELKMPREVIEDIDGKLKLSEMTDVEIDDVDVVYMTRIQKERFVDVNEYYKVKGIYRLSKEHIGNKNVVIMHPLPRVDEIDSEVDNIPQARYFKQSFYGVPVRMAILKLLFEDSIK.

Carbamoyl phosphate-binding residues include Arg-53 and Thr-54. Lys-82 contacts L-aspartate. 3 residues coordinate carbamoyl phosphate: Arg-103, His-131, and Gln-134. L-aspartate is bound by residues Arg-164 and Arg-223. Carbamoyl phosphate contacts are provided by Leu-260 and Pro-261.

Belongs to the aspartate/ornithine carbamoyltransferase superfamily. ATCase family. In terms of assembly, heterooligomer of catalytic and regulatory chains.

It carries out the reaction carbamoyl phosphate + L-aspartate = N-carbamoyl-L-aspartate + phosphate + H(+). The protein operates within pyrimidine metabolism; UMP biosynthesis via de novo pathway; (S)-dihydroorotate from bicarbonate: step 2/3. Functionally, catalyzes the condensation of carbamoyl phosphate and aspartate to form carbamoyl aspartate and inorganic phosphate, the committed step in the de novo pyrimidine nucleotide biosynthesis pathway. This chain is Aspartate carbamoyltransferase catalytic subunit, found in Methanococcus maripaludis (strain C7 / ATCC BAA-1331).